We begin with the raw amino-acid sequence, 463 residues long: Major capsid protein (463 aa).

It belongs to the NCLDV major capsid protein family. In terms of assembly, homotrimer.

Its subcellular location is the virion. Major capsid protein that self assembles to form an icosahedral capsid. Represents around 50% of the total virion protein mass. This Rana tigrina ranavirus protein is Major capsid protein (MCP).